A 354-amino-acid polypeptide reads, in one-letter code: Probable L-ascorbate-6-phosphate lactonase UlaG (354 aa).

Belongs to the UlaG family. A divalent metal cation serves as cofactor.

It localises to the cytoplasm. The enzyme catalyses L-ascorbate 6-phosphate + H2O = 3-dehydro-L-gulonate 6-phosphate. The protein operates within cofactor degradation; L-ascorbate degradation; D-xylulose 5-phosphate from L-ascorbate: step 1/4. Its function is as follows. Probably catalyzes the hydrolysis of L-ascorbate-6-P into 3-keto-L-gulonate-6-P. Is essential for L-ascorbate utilization under anaerobic conditions. In Shigella boydii serotype 18 (strain CDC 3083-94 / BS512), this protein is Probable L-ascorbate-6-phosphate lactonase UlaG.